A 154-amino-acid chain; its full sequence is Telokin (154 aa).

The segment at 1-24 (ISGMSGRKASGSSPTSPINANKVE) is disordered. The span at 10–19 (SGSSPTSPIN) shows a compositional bias: polar residues. Positions 42–133 (PYFTKTILDM…ATCTAELLVE (92 aa)) constitute an Ig-like C2-type domain. A disordered region spans residues 134–154 (TMGKEGEGEGEGEEDEEEEEE). The span at 141–154 (GEGEGEEDEEEEEE) shows a compositional bias: acidic residues.

It belongs to the protein kinase superfamily. CAMK Ser/Thr protein kinase family. In terms of assembly, binds calmodulin.

Functionally, corresponds to the C-terminus of smooth muscle myosin light chain kinase. This chain is Telokin, found in Meleagris gallopavo (Wild turkey).